The following is a 742-amino-acid chain: Catalase-peroxidase (742 aa).

Residues 1 to 43 (MSDSCPVAHEGNTQSTSESENPVIPSPTPAANRPRNNRDWWPN) are disordered. Polar residues predominate over residues 11 to 20 (GNTQSTSESE). A cross-link (tryptophyl-tyrosyl-methioninium (Trp-Tyr) (with M-257)) is located at residues 109–231 (WHAAGTYRIA…LGAVQMGLIY (123 aa)). Residue His110 is the Proton acceptor of the active site. The tryptophyl-tyrosyl-methioninium (Tyr-Met) (with W-109) cross-link spans 231–257 (YVNPEGPNGQPDPLAAARDIRETFSRM). Residue His272 coordinates heme b.

It belongs to the peroxidase family. Peroxidase/catalase subfamily. As to quaternary structure, homodimer or homotetramer. Requires heme b as cofactor. Formation of the three residue Trp-Tyr-Met cross-link is important for the catalase, but not the peroxidase activity of the enzyme.

The enzyme catalyses H2O2 + AH2 = A + 2 H2O. It catalyses the reaction 2 H2O2 = O2 + 2 H2O. Its function is as follows. Bifunctional enzyme with both catalase and broad-spectrum peroxidase activity. This chain is Catalase-peroxidase, found in Rhodococcus jostii (strain RHA1).